The chain runs to 444 residues: Jacalin-related lectin 11 (444 aa).

Residue Ala-2 is modified to N-acetylalanine. Jacalin-type lectin domains follow at residues 2 to 143 (ALKV…YFIK), 146 to 290 (SIQS…YYAP), and 298 to 442 (PEKL…HVTA).

It belongs to the jacalin lectin family.

This Arabidopsis thaliana (Mouse-ear cress) protein is Jacalin-related lectin 11 (JAL11).